A 273-amino-acid chain; its full sequence is 4-hydroxy-tetrahydrodipicolinate reductase (273 aa).

NAD(+) contacts are provided by residues 12–17 (GAGGRM) and Glu38. Arg39 provides a ligand contact to NADP(+). NAD(+)-binding positions include 102–104 (GTT) and 126–129 (AANF). Residue His159 is the Proton donor/acceptor of the active site. His160 contacts (S)-2,3,4,5-tetrahydrodipicolinate. Lys163 serves as the catalytic Proton donor. 169-170 (GT) provides a ligand contact to (S)-2,3,4,5-tetrahydrodipicolinate.

It belongs to the DapB family. Homotetramer.

The protein localises to the cytoplasm. The enzyme catalyses (S)-2,3,4,5-tetrahydrodipicolinate + NAD(+) + H2O = (2S,4S)-4-hydroxy-2,3,4,5-tetrahydrodipicolinate + NADH + H(+). It carries out the reaction (S)-2,3,4,5-tetrahydrodipicolinate + NADP(+) + H2O = (2S,4S)-4-hydroxy-2,3,4,5-tetrahydrodipicolinate + NADPH + H(+). It functions in the pathway amino-acid biosynthesis; L-lysine biosynthesis via DAP pathway; (S)-tetrahydrodipicolinate from L-aspartate: step 4/4. Functionally, catalyzes the conversion of 4-hydroxy-tetrahydrodipicolinate (HTPA) to tetrahydrodipicolinate. This Pectobacterium atrosepticum (strain SCRI 1043 / ATCC BAA-672) (Erwinia carotovora subsp. atroseptica) protein is 4-hydroxy-tetrahydrodipicolinate reductase.